The sequence spans 357 residues: Serpentine receptor class epsilon-31 (357 aa).

7 consecutive transmembrane segments (helical) span residues 28-48 (VISI…NLSI), 61-81 (LMFL…GKFI), 121-141 (LLIF…FGIL), 165-185 (IPIF…FIVI), 192-212 (IIAR…WLFV), 253-273 (LVAV…SLTF), and 283-303 (FVEN…MFSI).

It belongs to the nematode receptor-like protein sre family.

Its subcellular location is the membrane. The sequence is that of Serpentine receptor class epsilon-31 (sre-31) from Caenorhabditis elegans.